The following is a 490-amino-acid chain: Probable cytosol aminopeptidase (490 aa).

Mn(2+) is bound by residues K256 and D261. K268 is an active-site residue. 3 residues coordinate Mn(2+): D280, D340, and E342. R344 is a catalytic residue.

Belongs to the peptidase M17 family. Mn(2+) is required as a cofactor.

The protein resides in the cytoplasm. It catalyses the reaction Release of an N-terminal amino acid, Xaa-|-Yaa-, in which Xaa is preferably Leu, but may be other amino acids including Pro although not Arg or Lys, and Yaa may be Pro. Amino acid amides and methyl esters are also readily hydrolyzed, but rates on arylamides are exceedingly low.. The enzyme catalyses Release of an N-terminal amino acid, preferentially leucine, but not glutamic or aspartic acids.. In terms of biological role, presumably involved in the processing and regular turnover of intracellular proteins. Catalyzes the removal of unsubstituted N-terminal amino acids from various peptides. This chain is Probable cytosol aminopeptidase, found in Prochlorococcus marinus (strain MIT 9313).